The primary structure comprises 391 residues: tRNA-specific 2-thiouridylase MnmA (391 aa).

Residues 35 to 42 (GLSGGVDS) and L61 contribute to the ATP site. C122 (nucleophile) is an active-site residue. A disulfide bridge connects residues C122 and C221. G147 serves as a coordination point for ATP. The segment at 171–173 (KDQ) is interaction with tRNA. The Cysteine persulfide intermediate role is filled by C221. Positions 328-329 (RY) are interaction with tRNA.

The protein belongs to the MnmA/TRMU family.

The protein resides in the cytoplasm. It catalyses the reaction S-sulfanyl-L-cysteinyl-[protein] + uridine(34) in tRNA + AH2 + ATP = 2-thiouridine(34) in tRNA + L-cysteinyl-[protein] + A + AMP + diphosphate + H(+). Its function is as follows. Catalyzes the 2-thiolation of uridine at the wobble position (U34) of tRNA, leading to the formation of s(2)U34. The sequence is that of tRNA-specific 2-thiouridylase MnmA from Synechococcus sp. (strain CC9311).